The chain runs to 149 residues: MAAKVEPFWIRKTLDQLDTQEWESLCDGCGLCCLQKLEDEEDNSVYYTRIACKLLDLKTCQCSDYANRRASVPDCIQLTPGQADEFKWLPPTCGYRLVSEGKDLPLWHHLVCGDRTAVHHERISQSGRMLSEKNVAEDDWEDYLIFRAG.

It belongs to the UPF0260 family.

This is UPF0260 protein PSPTO_3918 from Pseudomonas syringae pv. tomato (strain ATCC BAA-871 / DC3000).